The chain runs to 331 residues: MIERDNGTKRHIPVLLEPVLAGLAPLSGATVIDGTFGAGGYTRALLNAGANVTALDRDPHAIREGKPLVDQFFPRLRLVQTEFSQLDRVIEEKVDAVILDIGVSSMQLDEAERGFSFQKDGPLDMRMAQTGLSASDVVNHLKIDDLIQIFRILGEERHSSRIAKMIEKRRRIRPFLRTRDLAHEIEVLIGRKPGDRIHPATRVFQALRIYVNDELNELTRGLFAAERVLKAGGRLGVVSFHSLEDRIVKKFFSFCSGNRKGSRYLPEVESAPATFFPLFKGGKTASEEELQKNPRARSARLRIGIRTQVDAMEADMKLFGLKEIANFESNK.

S-adenosyl-L-methionine is bound by residues 39–41 (GGY), Asp56, Phe83, Asp100, and Gln107.

It belongs to the methyltransferase superfamily. RsmH family.

It is found in the cytoplasm. The enzyme catalyses cytidine(1402) in 16S rRNA + S-adenosyl-L-methionine = N(4)-methylcytidine(1402) in 16S rRNA + S-adenosyl-L-homocysteine + H(+). Specifically methylates the N4 position of cytidine in position 1402 (C1402) of 16S rRNA. The sequence is that of Ribosomal RNA small subunit methyltransferase H from Bartonella bacilliformis (strain ATCC 35685 / KC583 / Herrer 020/F12,63).